Here is a 143-residue protein sequence, read N- to C-terminus: Large ribosomal subunit protein uL11 (143 aa).

Belongs to the universal ribosomal protein uL11 family. Part of the ribosomal stalk of the 50S ribosomal subunit. Interacts with L10 and the large rRNA to form the base of the stalk. L10 forms an elongated spine to which L12 dimers bind in a sequential fashion forming a multimeric L10(L12)X complex. In terms of processing, one or more lysine residues are methylated.

Its function is as follows. Forms part of the ribosomal stalk which helps the ribosome interact with GTP-bound translation factors. The protein is Large ribosomal subunit protein uL11 of Chromohalobacter salexigens (strain ATCC BAA-138 / DSM 3043 / CIP 106854 / NCIMB 13768 / 1H11).